We begin with the raw amino-acid sequence, 150 residues long: Catabolic 3-dehydroquinase (150 aa).

Catalysis depends on Tyr-24, which acts as the Proton acceptor. The substrate site is built by Asn-75, His-81, and Asp-88. The active-site Proton donor is the His-101. Residues 102-103 (IS) and Arg-112 contribute to the substrate site.

Belongs to the type-II 3-dehydroquinase family. As to quaternary structure, homododecamer. Adopts a ring-like structure, composed of an arrangement of two hexameric rings stacked on top of one another.

The enzyme catalyses 3-dehydroquinate = 3-dehydroshikimate + H2O. It functions in the pathway aromatic compound metabolism; 3,4-dihydroxybenzoate biosynthesis; 3,4-dihydroxybenzoate from 3-dehydroquinate: step 1/2. In terms of biological role, is involved in the catabolism of quinate. Allows the utilization of quinate as carbon source via the beta-ketoadipate pathway. The polypeptide is Catabolic 3-dehydroquinase (Verticillium alfalfae (strain VaMs.102 / ATCC MYA-4576 / FGSC 10136) (Verticillium wilt of alfalfa)).